Consider the following 113-residue polypeptide: Integration host factor subunit alpha (113 aa).

Residues 88 to 113 (ALNGGVSDETEGADDDDDDEEGEGDE) are disordered. The segment covering 95 to 113 (DETEGADDDDDDEEGEGDE) has biased composition (acidic residues).

This sequence belongs to the bacterial histone-like protein family. Heterodimer of an alpha and a beta chain.

Its function is as follows. This protein is one of the two subunits of integration host factor, a specific DNA-binding protein that functions in genetic recombination as well as in transcriptional and translational control. The polypeptide is Integration host factor subunit alpha (Anaeromyxobacter dehalogenans (strain 2CP-C)).